The chain runs to 467 residues: Transcriptional regulator of yeast form adherence 6 (467 aa).

Positions 43–52 are enriched in polar residues; that stretch reads NTSDAGSIPT. Disordered regions lie at residues 43–83, 128–149, 245–275, 312–365, and 390–439; these read NTSD…NIDS, GSSG…NSNN, ESPE…SNSS, NNQL…SGSK, and STLN…DNDR. A bHLH domain is found at 92–173; sequence ETKQLHSIIE…KSSVEYILYL (82 aa). Composition is skewed to low complexity over residues 257 to 275 and 312 to 322; these read VSET…SNSS and NNQLNNRKNSN. The span at 323-338 shows a compositional bias: polar residues; that stretch reads PISPQTVCIKSQNPSP. Over residues 345–365 the composition is skewed to low complexity; it reads SSLSTSIVNSPSSSSSLSGSK. A compositionally biased stretch (polar residues) spans 417–432; sequence GSANTETVNSGSASSD.

The protein resides in the nucleus. Transcription factor required for yeast cell adherence to silicone substrate. This Candida albicans (strain SC5314 / ATCC MYA-2876) (Yeast) protein is Transcriptional regulator of yeast form adherence 6 (TRY6).